Reading from the N-terminus, the 327-residue chain is Leucotoxin LukDv (327 aa).

Residues Met1–Ala26 form the signal peptide.

This sequence belongs to the aerolysin family. In terms of assembly, toxicity requires sequential binding and synergistic association of a class S and a class F component which form heterooligomeric complexes. LukEv (class S) associates with LukDv (class F).

The protein localises to the secreted. Part of a bi-component leucotoxin that acts by forming pores in the membrane of the target cells. The activity of LukEv-LukDv to rabbit leukocytes is similar to that of the Panton-Valentine leucocidin (PVL). LukEv-LukDv is hemolytic to rabbit red blood cells although the activity is only 8% of gamma-hemolysin. The protein is Leucotoxin LukDv (lukDv) of Staphylococcus aureus (strain NCTC 8325 / PS 47).